The following is a 134-amino-acid chain: Cytochrome b5 (134 aa).

Residues 5 to 81 enclose the Cytochrome b5 heme-binding domain; the sequence is KKVLGFEEVS…MEKYYIGEID (77 aa). Heme contacts are provided by histidine 40 and histidine 64. The helical transmembrane segment at 107–127 threads the bilayer; sequence FMIKILQFLVPILILGLALVV.

The protein belongs to the cytochrome b5 family.

It localises to the endoplasmic reticulum membrane. It is found in the microsome membrane. Its function is as follows. Membrane bound hemoprotein which function as an electron carrier for several membrane bound oxygenases. This chain is Cytochrome b5 (CYB5), found in Brassica oleracea var. botrytis (Cauliflower).